The chain runs to 164 residues: Thiol peroxidase (164 aa).

One can recognise a Thioredoxin domain in the interval valine 18–asparagine 163. Cysteine 60 serves as the catalytic Cysteine sulfenic acid (-SOH) intermediate. Residues cysteine 60 and cysteine 93 are joined by a disulfide bond.

This sequence belongs to the peroxiredoxin family. Tpx subfamily. In terms of assembly, homodimer.

It catalyses the reaction a hydroperoxide + [thioredoxin]-dithiol = an alcohol + [thioredoxin]-disulfide + H2O. In terms of biological role, thiol-specific peroxidase that catalyzes the reduction of hydrogen peroxide and organic hydroperoxides to water and alcohols, respectively. Plays a role in cell protection against oxidative stress by detoxifying peroxides. The polypeptide is Thiol peroxidase (Staphylococcus epidermidis (strain ATCC 35984 / DSM 28319 / BCRC 17069 / CCUG 31568 / BM 3577 / RP62A)).